The primary structure comprises 107 residues: Iron-sulfur cluster assembly protein CyaY (107 aa).

This sequence belongs to the frataxin family.

Functionally, involved in iron-sulfur (Fe-S) cluster assembly. May act as a regulator of Fe-S biogenesis. The sequence is that of Iron-sulfur cluster assembly protein CyaY from Neisseria gonorrhoeae (strain ATCC 700825 / FA 1090).